We begin with the raw amino-acid sequence, 238 residues long: Ribosomal RNA large subunit methyltransferase E (238 aa).

Residues G76, W78, D99, D115, and D139 each coordinate S-adenosyl-L-methionine. K179 serves as the catalytic Proton acceptor.

This sequence belongs to the class I-like SAM-binding methyltransferase superfamily. RNA methyltransferase RlmE family.

Its subcellular location is the cytoplasm. It carries out the reaction uridine(2552) in 23S rRNA + S-adenosyl-L-methionine = 2'-O-methyluridine(2552) in 23S rRNA + S-adenosyl-L-homocysteine + H(+). Functionally, specifically methylates the uridine in position 2552 of 23S rRNA at the 2'-O position of the ribose in the fully assembled 50S ribosomal subunit. This chain is Ribosomal RNA large subunit methyltransferase E, found in Rhodopseudomonas palustris (strain BisB18).